The primary structure comprises 398 residues: Stabilizer of axonemal microtubules 2 (398 aa).

6 mn regions span residues Ser-114–Ile-126, Ile-148–Leu-162, Asn-248–Ala-260, Lys-282–Arg-296, Leu-316–Leu-328, and Val-350–Ile-364.

The protein belongs to the FAM154 family.

The protein is Stabilizer of axonemal microtubules 2 (SAXO2) of Homo sapiens (Human).